Here is a 165-residue protein sequence, read N- to C-terminus: MDIAHDLQVIAAQEHTLVFPQFDADRAWQVGAYLHEVAKARGIPVAIDVRTFGQPLFFSLLDGATPDNIDWVRRKSNTVAHFRRSSYAIGLKLQQAGGTLADKHALAASEYASHGGAFPLTVAHAGVIGSITVSGLPQRADHELVVEALCAHLGHDYSKLALAKA.

The protein belongs to the UPF0303 family.

The sequence is that of UPF0303 protein Bphyt_1734 from Paraburkholderia phytofirmans (strain DSM 17436 / LMG 22146 / PsJN) (Burkholderia phytofirmans).